We begin with the raw amino-acid sequence, 397 residues long: Phosphoribulokinase, chloroplastic (397 aa).

The transit peptide at 1–44 (MAVSAYTVPTTSHLGFNQKKQLFFCNKSAYKRVSFSSRPCVITC) directs the protein to the chloroplast. An intrachain disulfide couples Cys-62 to Cys-101.

Belongs to the phosphoribulokinase family.

The protein resides in the plastid. It localises to the chloroplast. It carries out the reaction D-ribulose 5-phosphate + ATP = D-ribulose 1,5-bisphosphate + ADP + H(+). The protein operates within carbohydrate biosynthesis; Calvin cycle. With respect to regulation, light regulated via thioredoxin by reversible oxidation/reduction of sulfhydryl/disulfide groups. The sequence is that of Phosphoribulokinase, chloroplastic from Mesembryanthemum crystallinum (Common ice plant).